We begin with the raw amino-acid sequence, 368 residues long: Cobalt-precorrin-5B C(1)-methyltransferase (368 aa).

Belongs to the CbiD family.

It catalyses the reaction Co-precorrin-5B + S-adenosyl-L-methionine = Co-precorrin-6A + S-adenosyl-L-homocysteine. The protein operates within cofactor biosynthesis; adenosylcobalamin biosynthesis; cob(II)yrinate a,c-diamide from sirohydrochlorin (anaerobic route): step 6/10. Catalyzes the methylation of C-1 in cobalt-precorrin-5B to form cobalt-precorrin-6A. The sequence is that of Cobalt-precorrin-5B C(1)-methyltransferase from Brucella ovis (strain ATCC 25840 / 63/290 / NCTC 10512).